Here is a 163-residue protein sequence, read N- to C-terminus: Phosphopantetheine adenylyltransferase (163 aa).

Ser11 serves as a coordination point for substrate. Residues 11–12 (SF) and His19 contribute to the ATP site. Substrate is bound by residues Lys43, Leu75, and Arg89. Residues 90–92 (GLR), Glu100, and 125–131 (YSFLSSS) contribute to the ATP site.

Belongs to the bacterial CoaD family. Homohexamer. Mg(2+) serves as cofactor.

It is found in the cytoplasm. It carries out the reaction (R)-4'-phosphopantetheine + ATP + H(+) = 3'-dephospho-CoA + diphosphate. It functions in the pathway cofactor biosynthesis; coenzyme A biosynthesis; CoA from (R)-pantothenate: step 4/5. Functionally, reversibly transfers an adenylyl group from ATP to 4'-phosphopantetheine, yielding dephospho-CoA (dPCoA) and pyrophosphate. The protein is Phosphopantetheine adenylyltransferase of Lysinibacillus sphaericus (strain C3-41).